We begin with the raw amino-acid sequence, 409 residues long: NADH-quinone oxidoreductase subunit 4 (409 aa).

The protein belongs to the complex I 49 kDa subunit family. NDH-1 is composed of 15 different subunits, Nqo1 to Nqo15. The complex has a L-shaped structure, with the hydrophobic arm (subunits Nqo7, Nqo8 and Nqo10 to Nqo14) embedded in the membrane and the hydrophilic peripheral arm (subunits Nqo1 to Nqo6, Nqo9 and Nqo15) protruding into the bacterial cytoplasm. The hydrophilic domain contains all the redox centers. This subunit interacts extensively with Nqo6.

The protein resides in the cell membrane. It catalyses the reaction a quinone + NADH + 5 H(+)(in) = a quinol + NAD(+) + 4 H(+)(out). In terms of biological role, NDH-1 shuttles electrons from NADH, via FMN and iron-sulfur (Fe-S) centers, to quinones in the respiratory chain. The immediate electron acceptor for the enzyme in this species is menaquinone. Couples the redox reaction to proton translocation (for every two electrons transferred, four hydrogen ions are translocated across the cytoplasmic membrane), and thus conserves the redox energy in a proton gradient required for the synthesis of ATP. The Nqo4 subunit may contain the quinone-binding site. The sequence is that of NADH-quinone oxidoreductase subunit 4 (nqo4) from Thermus thermophilus (strain ATCC 27634 / DSM 579 / HB8).